Consider the following 163-residue polypeptide: Probable protein tyrosine phosphatase type IVA B (163 aa).

Positions 10 to 161 (TIIESSTHKF…YKASKKAGCK (152 aa)) constitute a Tyrosine-protein phosphatase domain. Cysteine 49 and cysteine 104 are oxidised to a cystine. The Proton donor role is filled by aspartate 70. Cysteine 104 acts as the Phosphocysteine intermediate in catalysis. 105–110 (IAGLGR) serves as a coordination point for phosphate. Residue arginine 110 coordinates substrate. A Cysteine methyl ester modification is found at cysteine 160. Cysteine 160 is lipidated: S-farnesyl cysteine. Positions 161–163 (KIM) are cleaved as a propeptide — removed in mature form.

Belongs to the protein-tyrosine phosphatase family.

It localises to the membrane. It catalyses the reaction O-phospho-L-tyrosyl-[protein] + H2O = L-tyrosyl-[protein] + phosphate. This chain is Probable protein tyrosine phosphatase type IVA B, found in Dictyostelium discoideum (Social amoeba).